Reading from the N-terminus, the 294-residue chain is Non-selective voltage-gated ion channel VDAC2 (294 aa).

N-acetylalanine is present on Ala2. Residues Lys23 and Lys31 each contribute to the ATP site. Position 31 is an N6-acetyllysine; alternate (Lys31). Position 31 is an N6-succinyllysine; alternate (Lys31). A Glycyl lysine isopeptide (Lys-Gly) (interchain with G-Cter in ubiquitin); alternate cross-link involves residue Lys31. Beta stranded transmembrane passes span 37–46 (LVKLDVKTKS) and 50–58 (VEFSTSGSS). Glycyl lysine isopeptide (Lys-Gly) (interchain with G-Cter in ubiquitin) cross-links involve residues Lys64 and Lys72. The beta stranded transmembrane segment at 65-75 (VTGTLETKYKW) threads the bilayer. Residue Tyr78 is modified to Phosphotyrosine. Beta stranded transmembrane passes span 80–87 (LTFTEKWN), 91–100 (TLGTEIAIED), and 106–115 (LKLTFDTTFS). Thr118 carries the phosphothreonine modification. At Lys120 the chain carries N6-acetyllysine; alternate. Lys120 is covalently cross-linked (Glycyl lysine isopeptide (Lys-Gly) (interchain with G-Cter in ubiquitin); alternate). Glycyl lysine isopeptide (Lys-Gly) (interchain with G-Cter in ubiquitin) cross-links involve residues Lys121 and Lys124. 4 beta stranded membrane passes run 122 to 131 (SGKIKSSYKR), 134 to 141 (INLGCDVD), 148 to 156 (AIHGSAVFG), and 161 to 169 (LAGYQMTFD). Residue Lys172 forms a Glycyl lysine isopeptide (Lys-Gly) (interchain with G-Cter in ubiquitin) linkage. The next 6 membrane-spanning stretches (beta stranded) occupy residues 174 to 186 (KLTR…GYRT), 189 to 196 (FQLHTNVN), 200 to 209 (EFGGSIYQKV), 213 to 222 (LDTSVNLAWT), 229 to 238 (RFGIAAKYQL), and 242 to 249 (ASISAKVN). Ser251 carries the post-translational modification Phosphoserine. NAD(+) contacts are provided by residues 253-255 (LIG) and 271-275 (SALVD). The next 2 membrane-spanning stretches (beta stranded) occupy residues 253–262 (LIGVGYTQTL) and 265–274 (GVKLTLSALV). Lys277 is subject to N6-acetyllysine; alternate. Residue Lys277 forms a Glycyl lysine isopeptide (Lys-Gly) (interchain with G-Cter in ubiquitin); alternate linkage. A beta stranded transmembrane segment spans residues 284-293 (HKVGLALELE). Residue Lys285 forms a Glycyl lysine isopeptide (Lys-Gly) (interchain with G-Cter in ubiquitin) linkage.

Belongs to the eukaryotic mitochondrial porin family. Monomer, homodimer and higher order oligomers; formation of higher order structures is necessary for scramblase activity. Interacts with ARMC12 in a TBC1D21-dependent manner. Interacts with KLC3. Interacts with SPATA33. Interacts with PPP3CC in a SPATA33-dependent manner. Ubiquitinated by PRKN during mitophagy, leading to its degradation and enhancement of mitophagy. Deubiquitinated by USP30. As to expression, expressed in erythrocytes (at protein level). Expressed in all tissues examined.

It localises to the mitochondrion outer membrane. The protein localises to the membrane. The enzyme catalyses chloride(in) = chloride(out). It catalyses the reaction K(+)(in) = K(+)(out). It carries out the reaction a 1,2-diacyl-sn-glycero-3-phospho-L-serine(in) = a 1,2-diacyl-sn-glycero-3-phospho-L-serine(out). The catalysed reaction is a 1,2-diacyl-sn-glycero-3-phosphocholine(in) = a 1,2-diacyl-sn-glycero-3-phosphocholine(out). The enzyme catalyses a 1,2-diacyl-sn-glycero-3-phospho-(1D-myo-inositol)(in) = a 1,2-diacyl-sn-glycero-3-phospho-(1D-myo-inositol)(out). Its function is as follows. Non-selective voltage-gated ion channel that mediates the transport of anions and cations through the mitochondrion outer membrane and plasma membrane. The channel adopts an open conformation at zero mV and a closed conformation at both positive and negative potentials. There are two populations of channels; the main that functions in a lower open-state conductance with lower ion selectivity, that switch, in a voltage-dependent manner, from the open to a low-conducting 'closed' state and the other that has a normal ion selectivity in the typical high conductance, 'open' state. Binds various lipids, including the sphingolipid ceramide, the phospholipid phosphatidylcholine, and the sterols cholesterol and oxysterol. Binding of ceramide promotes the mitochondrial outer membrane permeabilization (MOMP) apoptotic pathway. In terms of biological role, catalyzes the scrambling of phospholipids across the outer mitochondrial membrane; the mechanism is unrelated to channel activity and is capable of translocating both anionic and zwitterionic phospholipids. This chain is Non-selective voltage-gated ion channel VDAC2, found in Homo sapiens (Human).